A 385-amino-acid chain; its full sequence is Flap endonuclease 1 (385 aa).

The N-domain stretch occupies residues 1–105 (MGIKGLNAII…HELSKRSARR (105 aa)). Mg(2+) is bound at residue Asp34. The DNA site is built by Arg47 and Arg71. Mg(2+) is bound by residues Asp87, Glu156, Glu158, Asp177, and Asp179. Positions 120 to 251 (EKLKHERRLV…VTALKLIKEH (132 aa)) are I-domain. Glu156 serves as a coordination point for DNA. 2 residues coordinate DNA: Gly229 and Asp231. Asp231 contacts Mg(2+). Residues 338 to 346 (VQGRLDGFF) are interaction with PCNA. A compositionally biased stretch (low complexity) spans 356–370 (LAAANAKAKSTKAGK). The interval 356 to 385 (LAAANAKAKSTKAGKQATKGKVGKPGRPRK) is disordered. A compositionally biased stretch (basic residues) spans 376-385 (KVGKPGRPRK).

It belongs to the XPG/RAD2 endonuclease family. FEN1 subfamily. In terms of assembly, interacts with PCNA. Three molecules of FEN1 bind to one PCNA trimer with each molecule binding to one PCNA monomer. PCNA stimulates the nuclease activity without altering cleavage specificity. Mg(2+) serves as cofactor. In terms of processing, phosphorylated. Phosphorylation upon DNA damage induces relocalization to the nuclear plasma.

The protein localises to the nucleus. It localises to the nucleolus. It is found in the nucleoplasm. The protein resides in the mitochondrion. In terms of biological role, structure-specific nuclease with 5'-flap endonuclease and 5'-3' exonuclease activities involved in DNA replication and repair. During DNA replication, cleaves the 5'-overhanging flap structure that is generated by displacement synthesis when DNA polymerase encounters the 5'-end of a downstream Okazaki fragment. It enters the flap from the 5'-end and then tracks to cleave the flap base, leaving a nick for ligation. Also involved in the long patch base excision repair (LP-BER) pathway, by cleaving within the apurinic/apyrimidinic (AP) site-terminated flap. Acts as a genome stabilization factor that prevents flaps from equilibrating into structures that lead to duplications and deletions. Also possesses 5'-3' exonuclease activity on nicked or gapped double-stranded DNA, and exhibits RNase H activity. Also involved in replication and repair of rDNA and in repairing mitochondrial DNA. In Lachancea thermotolerans (strain ATCC 56472 / CBS 6340 / NRRL Y-8284) (Yeast), this protein is Flap endonuclease 1.